The sequence spans 320 residues: Cytosolic Fe-S cluster assembly factor NUBP1 (320 aa).

M1 is subject to N-acetylmethionine. [4Fe-4S] cluster-binding residues include C8, C22, C25, and C31. 62 to 69 (GKGGVGKS) serves as a coordination point for ATP. [4Fe-4S] cluster is bound by residues C235 and C238.

The protein belongs to the Mrp/NBP35 ATP-binding proteins family. NUBP1/NBP35 subfamily. In terms of assembly, heterotetramer of 2 NUBP1 and 2 NUBP2 chains. Interacts with KIFC1. Interacts with the BBS/CCT complex subunit CCT1. Requires [4Fe-4S] cluster as cofactor.

It is found in the cytoplasm. The protein localises to the nucleus. Its subcellular location is the cell projection. The protein resides in the cytoskeleton. It localises to the cilium axoneme. It is found in the cilium basal body. The protein localises to the microtubule organizing center. Its subcellular location is the centrosome. The protein resides in the centriole. Component of the cytosolic iron-sulfur (Fe/S) protein assembly (CIA) machinery. Required for maturation of extramitochondrial Fe-S proteins. The NUBP1-NUBP2 heterotetramer forms a Fe-S scaffold complex, mediating the de novo assembly of an Fe-S cluster and its transfer to target apoproteins. Implicated in the regulation of centrosome duplication. Negatively regulates cilium formation and structure. This Bos taurus (Bovine) protein is Cytosolic Fe-S cluster assembly factor NUBP1.